Consider the following 203-residue polypeptide: ATP-dependent Clp protease proteolytic subunit 1 (203 aa).

The Nucleophile role is filled by Ser101. His126 is an active-site residue.

The protein belongs to the peptidase S14 family. As to quaternary structure, fourteen ClpP subunits assemble into 2 heptameric rings which stack back to back to give a disk-like structure with a central cavity, resembling the structure of eukaryotic proteasomes.

Its subcellular location is the cytoplasm. It catalyses the reaction Hydrolysis of proteins to small peptides in the presence of ATP and magnesium. alpha-casein is the usual test substrate. In the absence of ATP, only oligopeptides shorter than five residues are hydrolyzed (such as succinyl-Leu-Tyr-|-NHMec, and Leu-Tyr-Leu-|-Tyr-Trp, in which cleavage of the -Tyr-|-Leu- and -Tyr-|-Trp bonds also occurs).. Its function is as follows. Cleaves peptides in various proteins in a process that requires ATP hydrolysis. Has a chymotrypsin-like activity. Plays a major role in the degradation of misfolded proteins. The polypeptide is ATP-dependent Clp protease proteolytic subunit 1 (Synechococcus sp. (strain JA-2-3B'a(2-13)) (Cyanobacteria bacterium Yellowstone B-Prime)).